The sequence spans 730 residues: DNA ligase (730 aa).

Positions 1–23 (MAGEQHAQPTSVPAEAREKHAQL) are disordered. Residues 44–48 (DAEFD), 93–94 (SL), and E124 each bind NAD(+). Residue K126 is the N6-AMP-lysine intermediate of the active site. 4 residues coordinate NAD(+): R147, E184, K300, and K324. Residues C418, C421, C437, and C443 each contribute to the Zn(2+) site. The BRCT domain maps to 638–727 (EGPRPLEGLT…PEAAAEVALP (90 aa)).

Belongs to the NAD-dependent DNA ligase family. LigA subfamily. Mg(2+) serves as cofactor. Requires Mn(2+) as cofactor.

It carries out the reaction NAD(+) + (deoxyribonucleotide)n-3'-hydroxyl + 5'-phospho-(deoxyribonucleotide)m = (deoxyribonucleotide)n+m + AMP + beta-nicotinamide D-nucleotide.. Its function is as follows. DNA ligase that catalyzes the formation of phosphodiester linkages between 5'-phosphoryl and 3'-hydroxyl groups in double-stranded DNA using NAD as a coenzyme and as the energy source for the reaction. It is essential for DNA replication and repair of damaged DNA. This Streptomyces avermitilis (strain ATCC 31267 / DSM 46492 / JCM 5070 / NBRC 14893 / NCIMB 12804 / NRRL 8165 / MA-4680) protein is DNA ligase.